Here is a 184-residue protein sequence, read N- to C-terminus: Elongation factor P (184 aa).

It belongs to the elongation factor P family.

It localises to the cytoplasm. It functions in the pathway protein biosynthesis; polypeptide chain elongation. In terms of biological role, involved in peptide bond synthesis. Stimulates efficient translation and peptide-bond synthesis on native or reconstituted 70S ribosomes in vitro. Probably functions indirectly by altering the affinity of the ribosome for aminoacyl-tRNA, thus increasing their reactivity as acceptors for peptidyl transferase. The polypeptide is Elongation factor P (Paracidovorax citrulli (strain AAC00-1) (Acidovorax citrulli)).